The chain runs to 223 residues: Endonuclease V (223 aa).

2 residues coordinate Mg(2+): aspartate 45 and aspartate 113.

This sequence belongs to the endonuclease V family. Mg(2+) is required as a cofactor.

It is found in the cytoplasm. The catalysed reaction is Endonucleolytic cleavage at apurinic or apyrimidinic sites to products with a 5'-phosphate.. DNA repair enzyme involved in the repair of deaminated bases. Selectively cleaves double-stranded DNA at the second phosphodiester bond 3' to a deoxyinosine leaving behind the intact lesion on the nicked DNA. The sequence is that of Endonuclease V from Dehalococcoides mccartyi (strain CBDB1).